The sequence spans 474 residues: Nucleobindin-1 (474 aa).

The N-terminal stretch at 1–24 (MPPSGPRAALFLLPSLLLLRAVLA) is a signal peptide. Ser-83 carries the phosphoserine modification. Phosphothreonine is present on Thr-145. A coiled-coil region spans residues 147-215 (EARDLELLIQ…QQRRHREHPK (69 aa)). Positions 190–207 (SLGEEQRKEAERKLEEQQ) are enriched in basic and acidic residues. Residues 190 to 218 (SLGEEQRKEAERKLEEQQRRHREHPKVNV) are disordered. A binds to GNAI2 and GNAI3 region spans residues 225–318 (LKEVWEELDG…VTLEEFLAST (94 aa)). EF-hand domains lie at 237–272 (PNRF…ELEK) and 289–324 (ERLR…KEFG). Asp-250, Asn-252, Asp-254, Glu-261, Asp-302, Asn-304, Asp-306, and Glu-313 together coordinate Ca(2+). The short motif at 300–330 (NVDTNQDRLVTLEEFLASTQRKEFGDTGEGW) is the GBA element. Positions 355-422 (AYTEEELRRF…RKQQQQSHNN (68 aa)) form a coiled coil. A disordered region spans residues 382–474 (LSQETEALGR…EPPQLDSQHL (93 aa)). At Ser-383 the chain carries Phosphoserine. Basic and acidic residues predominate over residues 448-460 (DQKDVDASEKKVP). Phosphoserine is present on Ser-471.

This sequence belongs to the nucleobindin family. As to quaternary structure, interacts (via GBA motif) with guanine nucleotide-binding protein G(i) alpha subunits GNAI1, GNAI2 and GNAI3 with higher affinity for GNAI1 and GNAI3 than for GNAI2. Preferentially interacts with inactive rather than active GNAI3. Interaction with GNAI3 is inhibited when NUCB1 binds calcium, probably due to a conformational change which renders the GBA motif inaccessible. In terms of tissue distribution, expressed in bone where it is detected in the soft tissue in the center of the osteon and in the osteocyte lacuna (at protein level).

Its subcellular location is the golgi apparatus. The protein resides in the cis-Golgi network membrane. It localises to the cytoplasm. It is found in the secreted. Its function is as follows. Major calcium-binding protein of the Golgi which may have a role in calcium homeostasis. Acts as a non-receptor guanine nucleotide exchange factor which binds to and activates alpha subunits of guanine nucleotide-binding proteins (G proteins). The sequence is that of Nucleobindin-1 (NUCB1) from Bos taurus (Bovine).